Reading from the N-terminus, the 275-residue chain is Shikimate dehydrogenase (NADP(+)) (275 aa).

Shikimate contacts are provided by residues 15-17 and Thr62; that span reads SKS. Residue Lys66 is the Proton acceptor of the active site. Glu78 is an NADP(+) binding site. Asn87 and Asp102 together coordinate shikimate. Residues 128–132, 151–156, and Leu218 each bind NADP(+); these read GAGGA and NRTAEK. Tyr220 lines the shikimate pocket. Gly241 contacts NADP(+).

It belongs to the shikimate dehydrogenase family. Homodimer.

The enzyme catalyses shikimate + NADP(+) = 3-dehydroshikimate + NADPH + H(+). It participates in metabolic intermediate biosynthesis; chorismate biosynthesis; chorismate from D-erythrose 4-phosphate and phosphoenolpyruvate: step 4/7. Involved in the biosynthesis of the chorismate, which leads to the biosynthesis of aromatic amino acids. Catalyzes the reversible NADPH linked reduction of 3-dehydroshikimate (DHSA) to yield shikimate (SA). The protein is Shikimate dehydrogenase (NADP(+)) of Shouchella clausii (strain KSM-K16) (Alkalihalobacillus clausii).